The chain runs to 457 residues: Multidrug resistance protein MdtK (457 aa).

Helical transmembrane passes span 11 to 31, 53 to 73, 93 to 113, 127 to 147, 159 to 179, 190 to 210, 249 to 269, 276 to 296, 313 to 333, 357 to 377, 387 to 407, and 417 to 437; these read LSAL…MGVV, IWLP…PVVA, FLAA…EYAI, AIGY…YQVL, PGMM…YIFI, GVGC…LMML, LLFE…LGVV, IALN…VATT, IAAH…AIFT, LMLL…GTGV, IFYI…YLLA, and GPAG…VMMV.

Belongs to the multi antimicrobial extrusion (MATE) (TC 2.A.66.1) family. MdtK subfamily.

It localises to the cell inner membrane. Its function is as follows. Multidrug efflux pump that functions probably as a Na(+)/drug antiporter. The protein is Multidrug resistance protein MdtK of Pectobacterium atrosepticum (strain SCRI 1043 / ATCC BAA-672) (Erwinia carotovora subsp. atroseptica).